The primary structure comprises 283 residues: Shikimate dehydrogenase (NADP(+)) (283 aa).

Shikimate contacts are provided by residues 16–18 (SLS) and threonine 63. Lysine 67 serves as the catalytic Proton acceptor. An NADP(+)-binding site is contributed by aspartate 79. Shikimate contacts are provided by asparagine 88 and aspartate 103. Residues 128–132 (GAGGA), alanine 223, and glycine 243 contribute to the NADP(+) site.

This sequence belongs to the shikimate dehydrogenase family. Homodimer.

It carries out the reaction shikimate + NADP(+) = 3-dehydroshikimate + NADPH + H(+). It participates in metabolic intermediate biosynthesis; chorismate biosynthesis; chorismate from D-erythrose 4-phosphate and phosphoenolpyruvate: step 4/7. Its function is as follows. Involved in the biosynthesis of the chorismate, which leads to the biosynthesis of aromatic amino acids. Catalyzes the reversible NADPH linked reduction of 3-dehydroshikimate (DHSA) to yield shikimate (SA). The sequence is that of Shikimate dehydrogenase (NADP(+)) from Xanthomonas campestris pv. campestris (strain 8004).